A 360-amino-acid polypeptide reads, in one-letter code: Probable butyrate kinase (360 aa).

It belongs to the acetokinase family.

Its subcellular location is the cytoplasm. It carries out the reaction butanoate + ATP = butanoyl phosphate + ADP. This chain is Probable butyrate kinase, found in Enterococcus faecalis (strain ATCC 700802 / V583).